Here is a 316-residue protein sequence, read N- to C-terminus: Olfactory receptor 5P79 (316 aa).

Topologically, residues 1 to 28 are extracellular; sequence MGILKDGNHTAVTEFILLGLTDDPVLKV. Asn8 is a glycosylation site (N-linked (GlcNAc...) asparagine). The helical transmembrane segment at 29–49 threads the bilayer; it reads VLFTIILCIYLVTVSGNLSTI. Topologically, residues 50–57 are cytoplasmic; sequence LLIRVSSQ. The chain crosses the membrane as a helical span at residues 58-78; sequence LHHPMYFFLSHLASVDIGISS. At 79–102 the chain is on the extracellular side; it reads SVTPNMLVNFLLERSTISYLGCGI. The cysteines at positions 100 and 192 are disulfide-linked. The chain crosses the membrane as a helical span at residues 103–123; the sequence is QLGSGAFFGSTESFLLAAMAY. The Cytoplasmic portion of the chain corresponds to 124-136; that stretch reads DHFMAICNPLLYS. A helical membrane pass occupies residues 137 to 157; the sequence is TKMSTQVCIQLLVGSYIGGFL. The Extracellular segment spans residues 158–199; the sequence is NASSFILSFFSFLFCGPNKVNHFFCDFTPLVELSCSDNSVLL. A helical transmembrane segment spans residues 200–220; the sequence is ILDSFSAGSIIVITVLVIAIS. The Cytoplasmic segment spans residues 221–240; sequence YTYILITILKMHSTEGRHKA. The chain crosses the membrane as a helical span at residues 241–261; the sequence is FSTCTSHLTAVTVFYGTVTFI. Topologically, residues 262-274 are extracellular; sequence YVMPKSSYSTDQN. The helical transmembrane segment at 275–297 threads the bilayer; the sequence is KVLSVFYMIAIAIPMLNPLIYSL. Topologically, residues 298-316 are cytoplasmic; it reads RNNEIKNALKRQLSKKTFS.

This sequence belongs to the G-protein coupled receptor 1 family.

The protein localises to the cell membrane. In terms of biological role, potential odorant receptor. This Mus musculus (Mouse) protein is Olfactory receptor 5P79.